Reading from the N-terminus, the 188-residue chain is Cell division protein SepF (188 aa).

This sequence belongs to the SepF family. As to quaternary structure, homodimer. Interacts with FtsZ.

The protein localises to the cytoplasm. Cell division protein that is part of the divisome complex and is recruited early to the Z-ring. Probably stimulates Z-ring formation, perhaps through the cross-linking of FtsZ protofilaments. Its function overlaps with FtsA. The sequence is that of Cell division protein SepF from Synechococcus sp. (strain CC9605).